The following is a 425-amino-acid chain: Multifunctional CCA protein (425 aa).

Glycine 8 and arginine 11 together coordinate ATP. The CTP site is built by glycine 8 and arginine 11. Mg(2+)-binding residues include aspartate 21 and aspartate 23. ATP is bound by residues arginine 91, arginine 141, and arginine 144. CTP-binding residues include arginine 91, arginine 141, and arginine 144. The HD domain occupies 230-331; sequence TGVHLMMVLD…VRLLERCDAI (102 aa).

This sequence belongs to the tRNA nucleotidyltransferase/poly(A) polymerase family. Bacterial CCA-adding enzyme type 1 subfamily. Monomer. Can also form homodimers and oligomers. Mg(2+) is required as a cofactor. It depends on Ni(2+) as a cofactor.

It carries out the reaction a tRNA precursor + 2 CTP + ATP = a tRNA with a 3' CCA end + 3 diphosphate. The enzyme catalyses a tRNA with a 3' CCA end + 2 CTP + ATP = a tRNA with a 3' CCACCA end + 3 diphosphate. Its function is as follows. Catalyzes the addition and repair of the essential 3'-terminal CCA sequence in tRNAs without using a nucleic acid template. Adds these three nucleotides in the order of C, C, and A to the tRNA nucleotide-73, using CTP and ATP as substrates and producing inorganic pyrophosphate. tRNA 3'-terminal CCA addition is required both for tRNA processing and repair. Also involved in tRNA surveillance by mediating tandem CCA addition to generate a CCACCA at the 3' terminus of unstable tRNAs. While stable tRNAs receive only 3'-terminal CCA, unstable tRNAs are marked with CCACCA and rapidly degraded. The sequence is that of Multifunctional CCA protein from Acidovorax ebreus (strain TPSY) (Diaphorobacter sp. (strain TPSY)).